We begin with the raw amino-acid sequence, 604 residues long: Proline--tRNA ligase (604 aa).

Belongs to the class-II aminoacyl-tRNA synthetase family. ProS type 1 subfamily. Homodimer.

Its subcellular location is the cytoplasm. The enzyme catalyses tRNA(Pro) + L-proline + ATP = L-prolyl-tRNA(Pro) + AMP + diphosphate. Functionally, catalyzes the attachment of proline to tRNA(Pro) in a two-step reaction: proline is first activated by ATP to form Pro-AMP and then transferred to the acceptor end of tRNA(Pro). As ProRS can inadvertently accommodate and process non-cognate amino acids such as alanine and cysteine, to avoid such errors it has two additional distinct editing activities against alanine. One activity is designated as 'pretransfer' editing and involves the tRNA(Pro)-independent hydrolysis of activated Ala-AMP. The other activity is designated 'posttransfer' editing and involves deacylation of mischarged Ala-tRNA(Pro). The misacylated Cys-tRNA(Pro) is not edited by ProRS. In Nostoc punctiforme (strain ATCC 29133 / PCC 73102), this protein is Proline--tRNA ligase.